The primary structure comprises 427 residues: Adenylosuccinate synthetase (427 aa).

GTP contacts are provided by residues 12–18 (GDEGKGK) and 40–42 (GHT). Aspartate 13 functions as the Proton acceptor in the catalytic mechanism. Positions 13 and 40 each coordinate Mg(2+). Residues 13 to 16 (DEGK), 38 to 41 (NAGH), threonine 128, arginine 142, glutamine 223, threonine 238, and arginine 302 each bind IMP. The active-site Proton donor is the histidine 41. 298 to 304 (VTTGRAR) contributes to the substrate binding site. GTP-binding positions include arginine 304, 330–332 (KLD), and 412–414 (GVG).

It belongs to the adenylosuccinate synthetase family. Homodimer. The cofactor is Mg(2+).

The protein localises to the cytoplasm. It carries out the reaction IMP + L-aspartate + GTP = N(6)-(1,2-dicarboxyethyl)-AMP + GDP + phosphate + 2 H(+). It participates in purine metabolism; AMP biosynthesis via de novo pathway; AMP from IMP: step 1/2. In terms of biological role, plays an important role in the de novo pathway of purine nucleotide biosynthesis. Catalyzes the first committed step in the biosynthesis of AMP from IMP. The polypeptide is Adenylosuccinate synthetase (Frankia casuarinae (strain DSM 45818 / CECT 9043 / HFP020203 / CcI3)).